Here is a 1193-residue protein sequence, read N- to C-terminus: MHGEVSGPAGTPGYSIAIVTLDAHAAGPAARIAPRLQQDFPGLTLSIHAAAEWAEKPEALAAAREAIGRADIVIANLLFIEEHINAVLPELQAARERVDAFVGMIADPSIVKLTKMGDLDMQKPASGPMALLKKLRGASKEQGNSGESQMRMLRTIPKMLKFVPGKAQDLRAWFLSMQYWLGGSDDNLEQMVRYLVSRYSANRAWHRIHAKAPIEYPEVGLYHPSLPDRITTDPNDLPRPAGAKVTVGLLMLRSYILASDTAHYDAVIEAFERKGIAVLPAFAGGLDGRPAIDAYFHDKLGTTIDAMVSLTGFSLVGGPAYNDSHAAIEALKGLDVPYIAAHPLEFQTLGQWAQAGGGLGPVETTMLVALPEIDGATNPTVFAGRHDLSGCTGCPGGCKATAQAAECRAMSPCHERIQTLAEKTLRLALLRRSKIAERRVGVVLYGFPPNAGAVGTAAYLAVFESLFNVLNAMKREGYQLEVPESVQALRDAVLGGTASQYGQPANIAAHVSAEKIVSGTPWLADIEKAWGAAPGRIQSDGRGVYILGQQFGNVFVGVQPVFGYEGDPMRLLFEKGFAPTHAFSVFYRWLREDFGADVLLHFGMHGALEFMPGKQAGMSGACWPDRLIGALPNVYLYAANNPSEASLAKRRSNAITVTHLTPPLAKAGLYRGLQDLKDSLTRYRQLAPDAPEREELSLLIGEQARAVNLDMVDVDTMWLKLLETEGSLITDGLHVVGRPMTEEQIADNIALMPEMSSERRAEVEGMLRQETEIAGLLRALGGHYMEPVPGGDLIRAPEILPTGRNIHAFDPFRMPTAYAIQDGAAQAQRLLDAHPKLPETVALVLWGSDNIKSDGGPIAQALALMGARPRFDHYGRLAGADLIPLSELGRPRIDVIMTLSGIFRDLLPLQTRMLAEAAWKAANAEGEPLAQNFIRAHALSYAQEMGVDMETASLRVFSNAEGAYGSNVNVLVGSSAFGEEDELADAYEARKSFAYGRSGKPVQNAALLQKSLKTVDVAYQNLESVELGVTTVDHYFDTLGGIARAVKRARGEEASVYIGDQTRGGGTVRTLKDQIALETRARSLNPKYYEGLLKHGAEGVRQIEAQVTNTLGWSATTQQVEPWVYQRLSETFVLDEAMRRRLAELNPEASVRMAERLLEASARNYWQPDAETLAALQGAADELEDRLEGIAAE.

Belongs to the Mg-chelatase subunit H family.

The catalysed reaction is protoporphyrin IX + Mg(2+) + ATP + H2O = Mg-protoporphyrin IX + ADP + phosphate + 3 H(+). The protein operates within porphyrin-containing compound metabolism; bacteriochlorophyll biosynthesis (light-independent). Its function is as follows. Involved in bacteriochlorophyll pigment biosynthesis; introduces a magnesium ion into protoporphyrin IX to yield Mg-protoroporphyrin IX. This Cereibacter sphaeroides (strain ATCC 17023 / DSM 158 / JCM 6121 / CCUG 31486 / LMG 2827 / NBRC 12203 / NCIMB 8253 / ATH 2.4.1.) (Rhodobacter sphaeroides) protein is Magnesium-chelatase subunit H (bchH).